The following is a 494-amino-acid chain: Syntaphilin (494 aa).

Positions 1-75 are disordered; sequence MAMSLPGSRR…GIKPPTPEQY (75 aa). Over residues 7–49 the composition is skewed to low complexity; it reads GSRRTSAGSRRRTSPPVSVRDAYGTSSLSSSSNSGSYKGSDSS. A coiled-coil region spans residues 79–161; the sequence is LQQKEVCIRH…VKNNLIDKDK (83 aa). Disordered stretches follow at residues 191–246 and 338–398; these read MAKE…SGFA and CGTD…GQSV. Phosphoserine is present on residues Ser-200 and Ser-204. Residues 207 to 217 are compositionally biased toward polar residues; the sequence is RSLTRSSTYTK. Residue Thr-214 is modified to Phosphothreonine. Ser-219 is subject to Phosphoserine. The span at 230–246 shows a compositional bias: low complexity; it reads GDPSSGSAEDGADSGFA. Residues 344–353 show a composition bias toward basic and acidic residues; it reads SGDRCPELDA. A helical membrane pass occupies residues 425–444; that stretch reads YIVDLLAVVVPAVPTVAWLC.

In terms of assembly, binds to STX1A. Interacts with DNM1; this interaction inhibits the binding of DNM1 to AMPH and DNM1-receptor-mediated endocytosis. Brain specific. Found in synapses.

It is found in the membrane. The protein resides in the synapse. The protein localises to the synaptosome. Inhibits SNARE complex formation by absorbing free STX1A. The sequence is that of Syntaphilin from Homo sapiens (Human).